The sequence spans 1051 residues: Helicase POLQ-like (1051 aa).

The span at 1–10 (MANKHNLCKK) shows a compositional bias: basic residues. Disordered stretches follow at residues 1–28 (MANKHNLCKKRSLDLSEESTSESHAKRQ) and 61–112 (LFGT…APTD). Polar residues-rich tracts occupy residues 64–78 (TQATTSTNKMTQSGS) and 89–102 (SFPSAQSVPPNSAS). The segment covering 103 to 112 (KPDEASAPTD) has biased composition (basic and acidic residues). The Helicase ATP-binding domain maps to 274 to 446 (LPAIRQRKNL…FLNADVYTRG (173 aa)). 287–294 (LPTSGGKT) serves as a coordination point for ATP. A DEAH box motif is present at residues 391–394 (DELH). In terms of domain architecture, Helicase C-terminal spans 497 to 689 (HLAGLISECA…NEAVGLQSLI (193 aa)).

It belongs to the helicase family. SKI2 subfamily.

It localises to the nucleus. Its subcellular location is the chromosome. It catalyses the reaction Couples ATP hydrolysis with the unwinding of duplex DNA by translocating in the 3'-5' direction.. The enzyme catalyses ATP + H2O = ADP + phosphate + H(+). Single-stranded 3'-5' DNA helicase that plays a key role in homology-driven double-strand break (DSB) repair. Involved in different DSB repair mechanisms that are guided by annealing of extensive stretches of complementary bases at break ends, such as microhomology-mediated end-joining (MMEJ), single-strand annealing (SSA) or synthesis-dependent strand annealing (SDSA). The chain is Helicase POLQ-like from Drosophila melanogaster (Fruit fly).